We begin with the raw amino-acid sequence, 547 residues long: CTP synthase (547 aa).

The segment at M1–L265 is amidoligase domain. Residue S13 coordinates CTP. S13 serves as a coordination point for UTP. Residues S14–I19 and D71 each bind ATP. Mg(2+) contacts are provided by D71 and E139. Residues D146 to E148, K186 to Q191, and K222 contribute to the CTP site. Residues K186 to Q191 and K222 each bind UTP. The Glutamine amidotransferase type-1 domain maps to T290–A542. Residue G351 participates in L-glutamine binding. C378 (nucleophile; for glutamine hydrolysis) is an active-site residue. Residues L379–Q382, E402, and R468 each bind L-glutamine. Catalysis depends on residues H515 and E517.

Belongs to the CTP synthase family. As to quaternary structure, homotetramer.

The enzyme catalyses UTP + L-glutamine + ATP + H2O = CTP + L-glutamate + ADP + phosphate + 2 H(+). It catalyses the reaction L-glutamine + H2O = L-glutamate + NH4(+). The catalysed reaction is UTP + NH4(+) + ATP = CTP + ADP + phosphate + 2 H(+). It participates in pyrimidine metabolism; CTP biosynthesis via de novo pathway; CTP from UDP: step 2/2. Its activity is regulated as follows. Allosterically activated by GTP, when glutamine is the substrate; GTP has no effect on the reaction when ammonia is the substrate. The allosteric effector GTP functions by stabilizing the protein conformation that binds the tetrahedral intermediate(s) formed during glutamine hydrolysis. Inhibited by the product CTP, via allosteric rather than competitive inhibition. Catalyzes the ATP-dependent amination of UTP to CTP with either L-glutamine or ammonia as the source of nitrogen. Regulates intracellular CTP levels through interactions with the four ribonucleotide triphosphates. This Janthinobacterium sp. (strain Marseille) (Minibacterium massiliensis) protein is CTP synthase.